Here is a 293-residue protein sequence, read N- to C-terminus: Methylsterol monooxygenase 1 (293 aa).

2 helical membrane-spanning segments follow: residues 55 to 75 (LIVH…FQFI) and 100 to 120 (GILF…YYFT). In terms of domain architecture, Fatty acid hydroxylase spans 144 to 274 (GCAVIEDTWH…FTWWDRIFGT (131 aa)). Residues 157 to 161 (HRLLH) carry the Histidine box-1 motif. A Histidine box-2 motif is present at residues 170–174 (HKVHH). Residues 199–219 (FFIGIVLLCDHVILLWAWVTM) form a helical membrane-spanning segment. Positions 249–255 (HHDFHHM) match the Histidine box-3 motif.

This sequence belongs to the sterol desaturase family. Requires Fe cation as cofactor. Post-translationally, ubiquitinated by MARCHF6, leading to proteasomal degradation.

The protein resides in the endoplasmic reticulum membrane. The enzyme catalyses 4,4-dimethyl-5alpha-cholest-7-en-3beta-ol + 6 Fe(II)-[cytochrome b5] + 3 O2 + 5 H(+) = 4alpha-carboxy-4beta-methyl-5alpha-cholest-7-ene-3beta-ol + 6 Fe(III)-[cytochrome b5] + 4 H2O. It catalyses the reaction 4,4-dimethyl-5alpha-cholesta-8,24-dien-3beta-ol + 6 Fe(II)-[cytochrome b5] + 3 O2 + 5 H(+) = 4beta-methylzymosterol-4alpha-carboxylate + 6 Fe(III)-[cytochrome b5] + 4 H2O. It carries out the reaction 4alpha-methylzymosterol + 6 Fe(II)-[cytochrome b5] + 3 O2 + 5 H(+) = 4alpha-carboxyzymosterol + 6 Fe(III)-[cytochrome b5] + 4 H2O. The catalysed reaction is 4alpha-methyl-5alpha-cholest-7-en-3beta-ol + 6 Fe(II)-[cytochrome b5] + 3 O2 + 5 H(+) = 4alpha-carboxy-5alpha-cholest-7-en-3beta-ol + 6 Fe(III)-[cytochrome b5] + 4 H2O. The enzyme catalyses 4,4-dimethyl-5alpha-cholest-8-en-3beta-ol + 6 Fe(II)-[cytochrome b5] + 3 O2 + 5 H(+) = 4alpha-carboxy-4beta-methyl-5alpha-cholest-8-en-3beta-ol + 6 Fe(III)-[cytochrome b5] + 4 H2O. It catalyses the reaction 4alpha-methyl-5alpha-cholest-8-en-3beta-ol + 6 Fe(II)-[cytochrome b5] + 3 O2 + 5 H(+) = 4alpha-carboxy-5alpha-cholest-8-ene-3beta-ol + 6 Fe(III)-[cytochrome b5] + 4 H2O. The protein operates within steroid biosynthesis; zymosterol biosynthesis; zymosterol from lanosterol: step 3/6. It participates in steroid biosynthesis; cholesterol biosynthesis. Functionally, catalyzes the three-step monooxygenation required for the demethylation of 4,4-dimethyl and 4alpha-methylsterols, which can be subsequently metabolized to cholesterol. The sequence is that of Methylsterol monooxygenase 1 (Msmo1) from Rattus norvegicus (Rat).